We begin with the raw amino-acid sequence, 318 residues long: (1S)-1,7-diacetoxy-luvungin A aldo-keto reductase (318 aa).

Y54 acts as the Proton donor in catalysis.

The protein belongs to the aldo/keto reductase family. In terms of tissue distribution, expressed in flowers, maturing fruits and in juice vesicles.

The enzyme catalyses (1S)-1,7-diacetoxy-luvungin A + AH2 + H2O = (1R,2R,3S,8R,10R,11R,15S,16S)-3-(acetyloxy)-15-[(4R)-4-[(2S)-3,3-dimethyloxiran-2-yl]-1,4-dihydroxybutan-2-yl]-2,7,7,11,16-pentamethyl-5-oxo-6-oxatetracyclo[9.7.0.0(2,8).0(12,16)]octadec-12-en-10-yl acetate + acetate + A + H(+). The protein operates within secondary metabolite biosynthesis; terpenoid biosynthesis. Functionally, aldo-keto reductase involved in the biosynthesis of limonoids triterpene natural products such as limonin, a compound with insecticidal activity responsible for the bitter taste in citrus. Can use (1S)-1,7-diacetoxy-luvungin A as substrate. The sequence is that of (1S)-1,7-diacetoxy-luvungin A aldo-keto reductase from Citrus sinensis (Sweet orange).